We begin with the raw amino-acid sequence, 297 residues long: CASP-like protein 4A2 (297 aa).

Positions M1–A136 are disordered. Over M1 to T149 the chain is Cytoplasmic. Residues S8–S19 are compositionally biased toward low complexity. Residues L69–P83 are compositionally biased toward pro residues. The span at M93–R121 shows a compositional bias: polar residues. Residues A150 to A170 form a helical membrane-spanning segment. The Extracellular segment spans residues D171–Y189. The helical transmembrane segment at C190–C210 threads the bilayer. The Cytoplasmic portion of the chain corresponds to Y211–D225. A helical transmembrane segment spans residues L226 to A246. At A247–M265 the chain is on the extracellular side. A helical membrane pass occupies residues A266–I286. The Cytoplasmic segment spans residues S287–S297.

This sequence belongs to the Casparian strip membrane proteins (CASP) family. Homodimer and heterodimers.

It is found in the cell membrane. The protein is CASP-like protein 4A2 of Arabidopsis lyrata subsp. lyrata (Lyre-leaved rock-cress).